The primary structure comprises 820 residues: Mitogen-activated protein kinase kinase kinase kinase 2 (820 aa).

Residues 16–273 (FELLQRVGAG…AEKLLQHPFT (258 aa)) form the Protein kinase domain. ATP is bound by residues 22–30 (VGAGTYGDV) and K45. D136 (proton acceptor) is an active-site residue. Residues 294-314 (LGTPSPEDCELETYDMFPDTI) are PEST1. Position 328 is a phosphoserine (S328). Residues 344-360 (ETDPLNEPWEEEWTLLG) form a PEST2 region. The interval 387–442 (SEFQELDSPDDTMGTIKRAPFLGPLPTDPPAEEPLSSPPGTLPPPPSGPNSSPLLP) is disordered. S394 is modified (phosphoserine). The tract at residues 405 to 448 (APFLGPLPTDPPAEEPLSSPPGTLPPPPSGPNSSPLLPTAWATM) is PEST3. Pro residues predominate over residues 422 to 434 (SSPPGTLPPPPSG). Residues 482–793 (PLRIHAAVTW…IFRVLGAHRD (312 aa)) enclose the CNH domain.

Belongs to the protein kinase superfamily. STE Ser/Thr protein kinase family. STE20 subfamily. Interacts with TRAF2, TRAF6, MAP3K1/MEKK1 and MAP3K11/MLK3. Interacts with RAB8A. It depends on Mg(2+) as a cofactor. Polyubiquitinated through 'Lys-48'-polyubiquitin chains, allowing proteasomal turnover. Ubiquitination requires the kinase activity of MAP4K2/GCK. Post-translationally, autophosphorylated in response to tumor necrosis factor (TNF), endotoxins or pro-inflammatory stimuli. Autophosphorylation leads to activation. As to expression, highly expressed in germinal center but not mantle zone B-cells. Also expressed in lung, brain and placenta and at lower levels in other tissues examined.

Its subcellular location is the cytoplasm. It localises to the basolateral cell membrane. The protein resides in the golgi apparatus membrane. It carries out the reaction L-seryl-[protein] + ATP = O-phospho-L-seryl-[protein] + ADP + H(+). The enzyme catalyses L-threonyl-[protein] + ATP = O-phospho-L-threonyl-[protein] + ADP + H(+). Its activity is regulated as follows. The tumor necrosis factor (TNF), as well as endotoxins and pro-inflammatory stimuli such as polyinosine-polycytidine (poly(IC)), lipopolysaccharides (LPS), peptidoglycan (PGN), flagellin, or lipid A activate MAP4K2 by promoting its autophosphorylation. Serine/threonine-protein kinase which acts as an essential component of the MAP kinase signal transduction pathway. Acts as a MAPK kinase kinase kinase (MAP4K) and is an upstream activator of the stress-activated protein kinase/c-Jun N-terminal kinase (SAP/JNK) signaling pathway and to a lesser extent of the p38 MAPKs signaling pathway. Required for the efficient activation of JNKs by TRAF6-dependent stimuli, including pathogen-associated molecular patterns (PAMPs) such as polyinosine-polycytidine (poly(IC)), lipopolysaccharides (LPS), lipid A, peptidoglycan (PGN), or bacterial flagellin. To a lesser degree, IL-1 and engagement of CD40 also stimulate MAP4K2-mediated JNKs activation. The requirement for MAP4K2/GCK is most pronounced for LPS signaling, and extends to LPS stimulation of c-Jun phosphorylation and induction of IL-8. Enhances MAP3K1 oligomerization, which may relieve N-terminal mediated MAP3K1 autoinhibition and lead to activation following autophosphorylation. Also mediates the SAP/JNK signaling pathway and the p38 MAPKs signaling pathway through activation of the MAP3Ks MAP3K10/MLK2 and MAP3K11/MLK3. May play a role in the regulation of vesicle targeting or fusion. regulation of vesicle targeting or fusion. Activator of the Hippo signaling pathway which plays a pivotal role in organ size control and tumor suppression by restricting proliferation and promoting apoptosis. MAP4Ks act in parallel to and are partially redundant with STK3/MST2 and STK4/MST2 in the phosphorylation and activation of LATS1/2, and establish MAP4Ks as components of the expanded Hippo pathway. This is Mitogen-activated protein kinase kinase kinase kinase 2 from Homo sapiens (Human).